The chain runs to 197 residues: Ion-translocating oxidoreductase complex subunit B (197 aa).

Residues 1-26 are hydrophobic; it reads MSTILIAIIALAALAAVFGAILGFAS. In terms of domain architecture, 4Fe-4S spans 32–90; it reads EADPIVDQIDSILPQTQCGQCGYPGCRPYAEAIANGDQINKCPPGGQATIEKLADLMGV. Residues Cys49, Cys52, Cys57, Cys73, Cys114, Cys117, Cys120, Cys124, Cys144, Cys147, Cys150, and Cys154 each contribute to the [4Fe-4S] cluster site. 4Fe-4S ferredoxin-type domains are found at residues 105 to 134 and 135 to 164; these read TVAF…GGTK and ALHT…MIPV.

It belongs to the 4Fe4S bacterial-type ferredoxin family. RnfB subfamily. In terms of assembly, the complex is composed of six subunits: RnfA, RnfB, RnfC, RnfD, RnfE and RnfG. Requires [4Fe-4S] cluster as cofactor.

It is found in the cell inner membrane. Its function is as follows. Part of a membrane-bound complex that couples electron transfer with translocation of ions across the membrane. This chain is Ion-translocating oxidoreductase complex subunit B, found in Vibrio campbellii (strain ATCC BAA-1116).